A 446-amino-acid polypeptide reads, in one-letter code: Plant intracellular Ras-group-related LRR protein 3 (446 aa).

Residues 65-100 (EACRAVVRLEETHDAYEALLQEAEGRLEAVYRSAME) are a coiled coil. Positions 101 to 121 (GKDLEEPDGRDESAAAAAGDD) are disordered. LRR repeat units lie at residues 138–160 (GKPVESVRLVDRQLRHLPEAFGR), 161–184 (IQGLRVLDVSRNQLEVIPDAIGGL), 185–207 (DHLEELRLASNALISLPDSIGLL), 208–230 (LNLRILNVGSNRLRSLPDSISKC), 232–254 (SLIELDASYNGLAYLPTNIGYEL), 255–277 (VNLRKLWVHMNKLRSLPSSICEM), 279–300 (SLYLLDAHFNELCGLPSAIGKL), 301–324 (SSLEILNLSSNFSDLKDLPASFGD), 325–347 (LLNLRELDLSNNQIHALPDNFGR), and 349–371 (DKLEKLNLEQNPLSMPPMEIVNK). A GVYW motif is present at residues 372–384 (GVDAVKEYMLQRW).

Belongs to the SHOC2 family. In terms of tissue distribution, widely expressed.

Its function is as follows. Leucine-rich repeat protein that likely mediates protein interactions, possibly in the context of signal transduction. This Oryza sativa subsp. japonica (Rice) protein is Plant intracellular Ras-group-related LRR protein 3 (IRL3).